Here is a 431-residue protein sequence, read N- to C-terminus: 3-phosphoshikimate 1-carboxyvinyltransferase (431 aa).

Lysine 21, serine 22, and arginine 26 together coordinate 3-phosphoshikimate. Phosphoenolpyruvate is bound at residue lysine 21. Positions 93 and 121 each coordinate phosphoenolpyruvate. Residues serine 166, glutamine 168, serine 192, aspartate 317, and lysine 344 each contribute to the 3-phosphoshikimate site. Glutamine 168 provides a ligand contact to phosphoenolpyruvate. Catalysis depends on aspartate 317, which acts as the Proton acceptor. The phosphoenolpyruvate site is built by arginine 348 and arginine 390.

Belongs to the EPSP synthase family. Monomer.

Its subcellular location is the cytoplasm. It catalyses the reaction 3-phosphoshikimate + phosphoenolpyruvate = 5-O-(1-carboxyvinyl)-3-phosphoshikimate + phosphate. The protein operates within metabolic intermediate biosynthesis; chorismate biosynthesis; chorismate from D-erythrose 4-phosphate and phosphoenolpyruvate: step 6/7. Functionally, catalyzes the transfer of the enolpyruvyl moiety of phosphoenolpyruvate (PEP) to the 5-hydroxyl of shikimate-3-phosphate (S3P) to produce enolpyruvyl shikimate-3-phosphate and inorganic phosphate. This chain is 3-phosphoshikimate 1-carboxyvinyltransferase, found in Herpetosiphon aurantiacus (strain ATCC 23779 / DSM 785 / 114-95).